Consider the following 470-residue polypeptide: 6-phospho-beta-galactosidase (470 aa).

D-galactose 6-phosphate contacts are provided by Gln19, His116, Asn159, Glu160, and Asn297. Glu160 functions as the Proton donor in the catalytic mechanism. The active-site Nucleophile is the Glu375. 4 residues coordinate D-galactose 6-phosphate: Ser430, Trp431, Lys437, and Tyr439.

This sequence belongs to the glycosyl hydrolase 1 family.

It catalyses the reaction a 6-phospho-beta-D-galactoside + H2O = D-galactose 6-phosphate + an alcohol. Its pathway is carbohydrate metabolism; lactose degradation; D-galactose 6-phosphate and beta-D-glucose from lactose 6-phosphate: step 1/1. This Staphylococcus aureus (strain COL) protein is 6-phospho-beta-galactosidase.